Consider the following 572-residue polypeptide: Proline--tRNA ligase (572 aa).

Belongs to the class-II aminoacyl-tRNA synthetase family. ProS type 1 subfamily. As to quaternary structure, homodimer.

It is found in the cytoplasm. The catalysed reaction is tRNA(Pro) + L-proline + ATP = L-prolyl-tRNA(Pro) + AMP + diphosphate. Functionally, catalyzes the attachment of proline to tRNA(Pro) in a two-step reaction: proline is first activated by ATP to form Pro-AMP and then transferred to the acceptor end of tRNA(Pro). As ProRS can inadvertently accommodate and process non-cognate amino acids such as alanine and cysteine, to avoid such errors it has two additional distinct editing activities against alanine. One activity is designated as 'pretransfer' editing and involves the tRNA(Pro)-independent hydrolysis of activated Ala-AMP. The other activity is designated 'posttransfer' editing and involves deacylation of mischarged Ala-tRNA(Pro). The misacylated Cys-tRNA(Pro) is not edited by ProRS. The chain is Proline--tRNA ligase from Bacillus licheniformis (strain ATCC 14580 / DSM 13 / JCM 2505 / CCUG 7422 / NBRC 12200 / NCIMB 9375 / NCTC 10341 / NRRL NRS-1264 / Gibson 46).